Here is a 152-residue protein sequence, read N- to C-terminus: Proteolipid protein 2 (152 aa).

N-linked (GlcNAc...) asparagine glycosylation occurs at N18. The region spanning 19-137 (FSRTRKGILL…DAYVTFPVRQ (119 aa)) is the MARVEL domain. The next 3 helical transmembrane spans lie at 25-45 (GILL…FSAS), 48-68 (GYSS…VVYM), and 85-105 (FFRT…VLVE). N108 carries an N-linked (GlcNAc...) asparagine glycan. Residues 112–132 (IVAGVLGLIATCLFGYDAYVT) form a helical membrane-spanning segment.

In terms of tissue distribution, enriched in colonic mucosa. The expression of A4 follows a gradient along the crypto-villus axis with the most abundant message occurring in the lower half of the crypt.

It is found in the membrane. Functionally, may play a role in cell differentiation in the intestinal epithelium. This Homo sapiens (Human) protein is Proteolipid protein 2 (PLP2).